The sequence spans 409 residues: Microfibrillar-associated protein 3-like (409 aa).

Positions 1-28 (MDRLKSHLTVCFLPSVPFLILVSTLATA) are cleaved as a signal peptide. The Extracellular segment spans residues 29–149 (KSVTNSTLNG…LRVIFTSGDM (121 aa)). Asn33, Asn37, Asn67, Asn111, and Asn135 each carry an N-linked (GlcNAc...) asparagine glycan. Residues 47 to 141 (PVIIARTDHI…GTVNNTVTLR (95 aa)) enclose the Ig-like C2-type domain. A disulfide bridge links Cys68 with Cys125. The chain crosses the membrane as a helical span at residues 150 to 172 (GVYYMVVCLVAFTIVMVLNITRL). At 173–409 (CMMSSHLKKT…NTCIIYESHV (237 aa)) the chain is on the cytoplasmic side. Tyr287 carries the phosphotyrosine; by EGFR modification. Disordered regions lie at residues 292–311 (SLKR…LHEQ) and 320–385 (SVHP…VLPP). 4 positions are modified to phosphoserine: Ser298, Ser303, Ser306, and Ser307. A compositionally biased stretch (basic and acidic residues) spans 339-355 (EVKDVEETELSAEHSPE). Residues 363–377 (VTSTELTSEEPTPVE) show a composition bias toward low complexity.

As to expression, highly expressed in testis.

It is found in the cell membrane. The protein resides in the nucleus. It localises to the cytoplasm. May participate in the nuclear signaling of EGFR and MAPK1/ERK2. May a have a role in metastasis. This chain is Microfibrillar-associated protein 3-like (MFAP3L), found in Homo sapiens (Human).